A 193-amino-acid polypeptide reads, in one-letter code: Recombination protein RecR (193 aa).

Residues 61–76 (CSSCNALSESEVCEIC) form a C4-type zinc finger. The Toprim domain maps to 84 to 170 (SQLCMVLHPR…TFTKIAQGVP (87 aa)).

This sequence belongs to the RecR family.

In terms of biological role, may play a role in DNA repair. It seems to be involved in an RecBC-independent recombinational process of DNA repair. It may act with RecF and RecO. This is Recombination protein RecR from Helicobacter pylori (strain P12).